The following is a 514-amino-acid chain: Probable endopolygalacturonase D (514 aa).

The first 16 residues, M1 to A16, serve as a signal peptide directing secretion. The disordered stretch occupies residues I134–T166. The segment covering S136–T166 has biased composition (low complexity). A disulfide bridge links C173 with C188. The N-linked (GlcNAc...) asparagine glycan is linked to N240. 7 PbH1 repeats span residues V280–N302, T303–S341, S342–S363, G364–S384, V393–T414, V422–Q444, and S456–G500. The interval T312–D335 is disordered. N-linked (GlcNAc...) asparagine glycosylation occurs at N322. The active-site Proton donor is D356. Cysteines 358 and 374 form a disulfide. A glycan (N-linked (GlcNAc...) asparagine) is linked at N366. Residue H378 is part of the active site. N429 is a glycosylation site (N-linked (GlcNAc...) asparagine). The cysteines at positions 483 and 488 are disulfide-linked. The N-linked (GlcNAc...) asparagine glycan is linked to N490. C506 and C513 are oxidised to a cystine.

It belongs to the glycosyl hydrolase 28 family.

Its subcellular location is the secreted. The enzyme catalyses (1,4-alpha-D-galacturonosyl)n+m + H2O = (1,4-alpha-D-galacturonosyl)n + (1,4-alpha-D-galacturonosyl)m.. Involved in maceration and soft-rotting of plant tissue. Hydrolyzes the 1,4-alpha glycosidic bonds of de-esterified pectate in the smooth region of the plant cell wall. The polypeptide is Probable endopolygalacturonase D (pgaD) (Emericella nidulans (strain FGSC A4 / ATCC 38163 / CBS 112.46 / NRRL 194 / M139) (Aspergillus nidulans)).